We begin with the raw amino-acid sequence, 296 residues long: Light-independent protochlorophyllide reductase iron-sulfur ATP-binding protein (296 aa).

Residues 39–44 and Lys-68 contribute to the ATP site; that span reads GIGKST. Ser-43 contacts Mg(2+). Positions 124 and 158 each coordinate [4Fe-4S] cluster. Residue 209–210 participates in ATP binding; sequence NR.

It belongs to the NifH/BchL/ChlL family. In terms of assembly, homodimer. Protochlorophyllide reductase is composed of three subunits; ChlL, ChlN and ChlB. [4Fe-4S] cluster serves as cofactor.

It catalyses the reaction chlorophyllide a + oxidized 2[4Fe-4S]-[ferredoxin] + 2 ADP + 2 phosphate = protochlorophyllide a + reduced 2[4Fe-4S]-[ferredoxin] + 2 ATP + 2 H2O. It participates in porphyrin-containing compound metabolism; chlorophyll biosynthesis (light-independent). Functionally, component of the dark-operative protochlorophyllide reductase (DPOR) that uses Mg-ATP and reduced ferredoxin to reduce ring D of protochlorophyllide (Pchlide) to form chlorophyllide a (Chlide). This reaction is light-independent. The L component serves as a unique electron donor to the NB-component of the complex, and binds Mg-ATP. The chain is Light-independent protochlorophyllide reductase iron-sulfur ATP-binding protein from Prochlorococcus marinus (strain MIT 9303).